The primary structure comprises 320 residues: Cytochrome f (320 aa).

An N-terminal signal peptide occupies residues 1-35; it reads MQTRNTFSWIREEITRSISVSLMIYIITWASISSA. Residues tyrosine 36, cysteine 56, cysteine 59, and histidine 60 each coordinate heme. The chain crosses the membrane as a helical span at residues 286–306; the sequence is VQGLLFFLGSVVLAQIFLVLK.

It belongs to the cytochrome f family. The 4 large subunits of the cytochrome b6-f complex are cytochrome b6, subunit IV (17 kDa polypeptide, petD), cytochrome f and the Rieske protein, while the 4 small subunits are PetG, PetL, PetM and PetN. The complex functions as a dimer. It depends on heme as a cofactor.

The protein resides in the plastid. It localises to the chloroplast thylakoid membrane. In terms of biological role, component of the cytochrome b6-f complex, which mediates electron transfer between photosystem II (PSII) and photosystem I (PSI), cyclic electron flow around PSI, and state transitions. This is Cytochrome f from Barbarea verna (Land cress).